The following is a 56-amino-acid chain: Large ribosomal subunit protein bL33 (56 aa).

Basic and acidic residues predominate over residues 1–12 (MATKGGRDKIKL). The segment at 1–24 (MATKGGRDKIKLESTAGTGHFYTT) is disordered. Over residues 15–24 (TAGTGHFYTT) the composition is skewed to polar residues.

This sequence belongs to the bacterial ribosomal protein bL33 family.

This is Large ribosomal subunit protein bL33 from Paracidovorax citrulli (strain AAC00-1) (Acidovorax citrulli).